Here is a 68-residue protein sequence, read N- to C-terminus: Antimicrobial peptide UyCT5 (68 aa).

A signal peptide spans 1-23 (MKNQFAILLLAVVFLQLISQSDA). L36 bears the Leucine amide mark. Residues 40–68 (GLKNADRLDELFDGDISDADLDFLRELMR) constitute a propeptide that is removed on maturation.

This sequence belongs to the non-disulfide-bridged peptide (NDBP) superfamily. Short antimicrobial peptide (group 4) family. As to expression, expressed by the venom gland.

It localises to the secreted. The protein localises to the target cell membrane. Functionally, antimicrobial peptide that inhibits the growth of Gram-positive (S.aureus, MIC=1 uM) and Gram-negative bacteria (E.coli, MIC=15 uM and P.aeruginosa, MIC=2 uM). It also shows 37% of hemolysis when 15 uM are tested (93% at 50 uM). The sequence is that of Antimicrobial peptide UyCT5 from Urodacus yaschenkoi (Inland robust scorpion).